The chain runs to 260 residues: Glutamate racemase (260 aa).

Residues 7–8 and 39–40 each bind substrate; these read DS and YG. Cys71 (proton donor/acceptor) is an active-site residue. Substrate is bound at residue 72-73; sequence NT. Cys182 acts as the Proton donor/acceptor in catalysis. A substrate-binding site is contributed by 183–184; the sequence is TH.

The protein belongs to the aspartate/glutamate racemases family.

The catalysed reaction is L-glutamate = D-glutamate. It functions in the pathway cell wall biogenesis; peptidoglycan biosynthesis. Its function is as follows. Provides the (R)-glutamate required for cell wall biosynthesis. This chain is Glutamate racemase, found in Sulfurihydrogenibium sp. (strain YO3AOP1).